The primary structure comprises 71 residues: Arrestin-D (71 aa).

It belongs to the arrestin family. Adrenal, cerebral cortex, heart, liver, lung, pituitary and testis.

The chain is Arrestin-D (Dar) from Rattus norvegicus (Rat).